Here is a 270-residue protein sequence, read N- to C-terminus: MQSSRGARAADVPVRLVVDIGNTSTTLAIFTGDEEPSVESVPSALFADSSTMREVFGNMARKHGEPQAIAICSVVPSATAVGSALLESLFSVPVLTICCKLRFPFRLDYATPHTFGADRLALCAWSRHLFSEKPVIAVDIGTAITFDVLDTVGNYRGGLIMPGIDMMAGALHSRTAQLPQVRIDRPESLLGRSTTECIKSGVFWGVVKQIGGLVDAIRGDLVRDFGESTVEVIVTGGNSRIIVPEIGPVSVIDELAVLRGSDLLLRMNMP.

19 to 26 (DIGNTSTT) is an ATP binding site. Substrate contacts are provided by residues Tyr-109 and 116 to 119 (GADR). The Proton acceptor role is filled by Asp-118. Asp-139 is a binding site for K(+). Thr-142 serves as a coordination point for ATP. A substrate-binding site is contributed by Thr-194.

Belongs to the type III pantothenate kinase family. As to quaternary structure, homodimer. Requires NH4(+) as cofactor. The cofactor is K(+).

Its subcellular location is the cytoplasm. The enzyme catalyses (R)-pantothenate + ATP = (R)-4'-phosphopantothenate + ADP + H(+). The protein operates within cofactor biosynthesis; coenzyme A biosynthesis; CoA from (R)-pantothenate: step 1/5. Functionally, catalyzes the phosphorylation of pantothenate (Pan), the first step in CoA biosynthesis. In Chlorobaculum tepidum (strain ATCC 49652 / DSM 12025 / NBRC 103806 / TLS) (Chlorobium tepidum), this protein is Type III pantothenate kinase.